We begin with the raw amino-acid sequence, 446 residues long: Probable D-serine dehydratase (446 aa).

Residue Lys-116 is modified to N6-(pyridoxal phosphate)lysine.

The protein belongs to the serine/threonine dehydratase family. DsdA subfamily. Pyridoxal 5'-phosphate serves as cofactor.

It catalyses the reaction D-serine = pyruvate + NH4(+). This Bacillus thuringiensis (strain Al Hakam) protein is Probable D-serine dehydratase.